Here is an 81-residue protein sequence, read N- to C-terminus: MSHAVKIYDTCIGCTQCVRACPLDVLEMVPWDGCKAAQIASSPRTEDCVGCKRCETACPTDFLSIRVYLGDETTRSMGLAY.

4Fe-4S ferredoxin-type domains are found at residues 2–31 (SHAV…MVPW) and 39–68 (IASS…IRVY). Cys11, Cys14, Cys17, Cys21, Cys48, Cys51, Cys54, and Cys58 together coordinate [4Fe-4S] cluster.

In terms of assembly, the cyanobacterial PSI reaction center is composed of one copy each of PsaA,B,C,D,E,F,I,J,K,L,M and X, and forms trimeric complexes. [4Fe-4S] cluster serves as cofactor.

The protein resides in the cellular thylakoid membrane. The catalysed reaction is reduced [plastocyanin] + hnu + oxidized [2Fe-2S]-[ferredoxin] = oxidized [plastocyanin] + reduced [2Fe-2S]-[ferredoxin]. Functionally, apoprotein for the two 4Fe-4S centers FA and FB of photosystem I (PSI); essential for photochemical activity. FB is the terminal electron acceptor of PSI, donating electrons to ferredoxin. The C-terminus interacts with PsaA/B/D and helps assemble the protein into the PSI complex. Required for binding of PsaD and PsaE to PSI. PSI is a plastocyanin/cytochrome c6-ferredoxin oxidoreductase, converting photonic excitation into a charge separation, which transfers an electron from the donor P700 chlorophyll pair to the spectroscopically characterized acceptors A0, A1, FX, FA and FB in turn. The protein is Photosystem I iron-sulfur center of Prochlorococcus marinus (strain MIT 9211).